Here is a 380-residue protein sequence, read N- to C-terminus: Fibromodulin (380 aa).

The signal sequence occupies residues 1–18; the sequence is MRWANILLVAGLCRASLG. In terms of domain architecture, LRRNT spans 71–109; it reads EAQQASSWQCPQECDCPPNFSSAMYCDTRNLRYLPFVPT. An N-linked (GlcNAc...) asparagine glycan is attached at asparagine 89. 8 LRR repeats span residues 110–131, 134–147, 160–180, 181–202, 205–227, 228–248, 249–270, and 273–293; these read RMKY…AFDN, ELEW…QISS, NLER…PLPR, SLRE…ALEG, NLTA…KGLK, SLIL…GLPM, ALEQ…YFKV, and KLLY…STNT. Residue asparagine 131 is glycosylated (N-linked (GlcNAc...) (keratan sulfate) asparagine). An N-linked (GlcNAc...) (keratan sulfate) asparagine glycan is attached at asparagine 170. A glycan (N-linked (GlcNAc...) (keratan sulfate) asparagine) is linked at asparagine 205. An N-linked (GlcNAc...) (keratan sulfate) asparagine glycan is attached at asparagine 295. LRR repeat units follow at residues 298–317 and 318–339; these read SILE…RVST and NLEN…SFCT. Cysteines 338 and 371 form a disulfide. Asparagine 345 carries N-linked (GlcNAc...) asparagine glycosylation. An LRR 11 repeat occupies 348-371; the sequence is RLQVLRLDGNEIKRNAMPPDAPLC.

It belongs to the small leucine-rich proteoglycan (SLRP) family. SLRP class II subfamily. As to quaternary structure, binds to type I and type II collagen. In terms of processing, binds keratan sulfate chains.

It is found in the secreted. The protein resides in the extracellular space. Its subcellular location is the extracellular matrix. Its function is as follows. Affects the rate of fibrils formation. May have a primary role in collagen fibrillogenesis. In Gallus gallus (Chicken), this protein is Fibromodulin (FMOD).